Here is a 193-residue protein sequence, read N- to C-terminus: DNA damage-inducible transcript 4-like protein (193 aa).

It belongs to the DDIT4 family.

It is found in the cytoplasm. Its function is as follows. Inhibits cell growth by regulating the TOR signaling pathway upstream of the TSC1-TSC2 complex and downstream of AKT1. This chain is DNA damage-inducible transcript 4-like protein (Ddit4l), found in Mus musculus (Mouse).